Reading from the N-terminus, the 325-residue chain is Probable 2-ketogluconate reductase (325 aa).

NAD(+) is bound by residues 158–159 (RI), T211, 238–240 (ISR), and D264. The active site involves R240. Residue E269 is part of the active site. Residue H288 is the Proton donor of the active site. Residue 288-291 (HIGS) coordinates NAD(+).

This sequence belongs to the D-isomer specific 2-hydroxyacid dehydrogenase family.

The catalysed reaction is D-gluconate + NADP(+) = 2-dehydro-D-gluconate + NADPH + H(+). The sequence is that of Probable 2-ketogluconate reductase (yvcT) from Bacillus subtilis (strain 168).